The sequence spans 1946 residues: Sickle tail protein (1946 aa).

2 disordered regions span residues 1–83 (MEES…GMQP) and 113–176 (ERLR…VRSA). The segment covering 18–36 (DSRQMPQQGRSNLHVTSQE) has biased composition (polar residues). The segment covering 38–47 (AACRRPRERL) has biased composition (basic and acidic residues). The residue at position 169 (S169) is a Phosphoserine. Y244 is subject to Phosphotyrosine. Disordered regions lie at residues 305 to 324 (HPPHVIPNSPPSTPVPHSLP) and 339 to 374 (AIPGNATIPRDRLSSLPVSRSISPSPSAILERRDVK). The segment covering 308–324 (HVIPNSPPSTPVPHSLP) has biased composition (pro residues). The segment covering 352 to 367 (SSLPVSRSISPSPSAI) has biased composition (low complexity). O-linked (GlcNAc) serine glycosylation is present at S357. Phosphoserine is present on residues S361 and S365. The residue at position 393 (Y393) is a Phosphotyrosine. The interval 455-512 (SRKYPDSHLPTLGSKTPPASPHRVGDLRMIDLHPHLNTHGPPHTLQPDRASPSRQSFK) is disordered. Residue T470 is modified to Phosphothreonine. Position 474 is a phosphoserine (S474). Residues 477 to 488 (RVGDLRMIDLHP) show a composition bias toward basic and acidic residues. Coiled coils occupy residues 557–581 (RETRERMQAMEKQIASLTGLVQSAL) and 644–685 (TSLL…ELEI). S809 is modified (phosphoserine). 2 disordered regions span residues 853–875 (EETAHAPGQPLHCSTGSPGDVKS) and 891–947 (SPVV…PVNG). Composition is skewed to polar residues over residues 891–909 (SPVVMQPSQHSSALMNPAQ) and 927–947 (QEVTSAQSAPGPQSPQTPVNG). The stretch at 962 to 990 (SAKNRAVSIEKAEKKWEEKRQNLEHYNGK) forms a coiled coil. The disordered stretch occupies residues 1008–1221 (PNLEMPPASS…LRPSGPPKWE (214 aa)). Residues S1032, S1035, S1038, and S1049 each carry the phosphoserine modification. Residues 1049–1058 (SPPPPPPPPR) are compositionally biased toward pro residues. Positions 1151–1162 (NPNSHAEQSRAN) are enriched in polar residues. Residues 1176 to 1194 (PKEKKNLEFYHEDVRKSDV) are compositionally biased toward basic and acidic residues. S1466 is modified (phosphoserine). The stretch at 1469–1495 (FEECDEELERMLTEEKIEEEEEDENED) forms a coiled coil. 3 disordered regions span residues 1482-1567 (EEKI…VDDQ), 1622-1664 (AKRF…RKST), and 1691-1946 (VDTS…KETS). The span at 1484-1495 (KIEEEEEDENED) shows a compositional bias: acidic residues. Polar residues predominate over residues 1498–1508 (VRTSSQMSCEQ). Basic and acidic residues-rich tracts occupy residues 1509–1518 (VDSRSDRMGQ) and 1622–1644 (AKRFEITRSQPEDALKTMARRQE). Residues 1659–1688 (EIRKSTYRTLDSLEQTIKQLENTISEMSPR) adopt a coiled-coil conformation. The segment covering 1739–1759 (KGSSTTPQTSRMPVPMTSKNR) has biased composition (polar residues). S1741 bears the Phosphoserine mark. A compositionally biased stretch (basic and acidic residues) spans 1765 to 1777 (KASKQSKLQDPRQ). Positions 1806-1825 (ALSPSSGKSSSLPSASGDSS) are enriched in low complexity. Position 1843 is a phosphoserine (S1843). Residues 1851–1866 (HSASLIPSVSNGSLKF) show a composition bias toward polar residues. Over residues 1890–1899 (AAPTTSSSSS) the composition is skewed to low complexity. Phosphoserine occurs at positions 1899, 1902, and 1905. Over residues 1920–1946 (HTPSLASYKAQNGSSSKATPSTAKETS) the composition is skewed to polar residues.

In terms of assembly, interacts with CPNE4 (via VWFA domain). Expressed predominantly in the notochord and mesonephros during embryogenesis as well as in other areas such as the epithalamus sulcus, lens vesicle, inner retinal layer, heart, hepatic primordial surface, infundibulum, surface ectoderm, hind gut and limb bud mesenchyme. In adults, expressed in a range of tissues including the nucleus pulposus, corpus callosum, kidney, cardiac muscle, Sertoli cells and hair follicles.

The protein resides in the cytoplasm. The protein localises to the cytoskeleton. Its subcellular location is the microtubule organizing center. It is found in the centrosome. Its function is as follows. Required for normal development of intervertebral disks. The chain is Sickle tail protein from Mus musculus (Mouse).